We begin with the raw amino-acid sequence, 342 residues long: N-acetyl-gamma-glutamyl-phosphate reductase (342 aa).

Residue Cys146 is part of the active site.

It belongs to the NAGSA dehydrogenase family. Type 1 subfamily.

Its subcellular location is the cytoplasm. The catalysed reaction is N-acetyl-L-glutamate 5-semialdehyde + phosphate + NADP(+) = N-acetyl-L-glutamyl 5-phosphate + NADPH + H(+). It functions in the pathway amino-acid biosynthesis; L-arginine biosynthesis; N(2)-acetyl-L-ornithine from L-glutamate: step 3/4. Its function is as follows. Catalyzes the NADPH-dependent reduction of N-acetyl-5-glutamyl phosphate to yield N-acetyl-L-glutamate 5-semialdehyde. The protein is N-acetyl-gamma-glutamyl-phosphate reductase of Saccharopolyspora erythraea (strain ATCC 11635 / DSM 40517 / JCM 4748 / NBRC 13426 / NCIMB 8594 / NRRL 2338).